The chain runs to 138 residues: Putative pre-16S rRNA nuclease (138 aa).

The protein belongs to the YqgF nuclease family.

It localises to the cytoplasm. Its function is as follows. Could be a nuclease involved in processing of the 5'-end of pre-16S rRNA. The chain is Putative pre-16S rRNA nuclease from Fusobacterium nucleatum subsp. nucleatum (strain ATCC 25586 / DSM 15643 / BCRC 10681 / CIP 101130 / JCM 8532 / KCTC 2640 / LMG 13131 / VPI 4355).